Reading from the N-terminus, the 310-residue chain is Conjugation stage-specific protein (310 aa).

It belongs to the archaeal Rpo3/eukaryotic RPB3 RNA polymerase subunit family.

The protein localises to the nucleus. In terms of biological role, may be a stage-specific RNA polymerase subunit. This chain is Conjugation stage-specific protein (CNJC), found in Tetrahymena thermophila.